Consider the following 323-residue polypeptide: Beta-ketoacyl-[acyl-carrier-protein] synthase III (323 aa).

Residues C113 and H250 contribute to the active site. Positions 251-255 (QANKR) are ACP-binding. Residue N280 is part of the active site.

Belongs to the thiolase-like superfamily. FabH family. In terms of assembly, homodimer.

The protein resides in the cytoplasm. It catalyses the reaction malonyl-[ACP] + acetyl-CoA + H(+) = 3-oxobutanoyl-[ACP] + CO2 + CoA. The protein operates within lipid metabolism; fatty acid biosynthesis. Its function is as follows. Catalyzes the condensation reaction of fatty acid synthesis by the addition to an acyl acceptor of two carbons from malonyl-ACP. Catalyzes the first condensation reaction which initiates fatty acid synthesis and may therefore play a role in governing the total rate of fatty acid production. Possesses both acetoacetyl-ACP synthase and acetyl transacylase activities. Its substrate specificity determines the biosynthesis of branched-chain and/or straight-chain of fatty acids. In Chelativorans sp. (strain BNC1), this protein is Beta-ketoacyl-[acyl-carrier-protein] synthase III.